We begin with the raw amino-acid sequence, 296 residues long: Thymidylate synthase (296 aa).

DUMP-binding positions include arginine 23 and 157 to 158 (RR). The Nucleophile role is filled by cysteine 177. DUMP is bound by residues 198–201 (RSAD), asparagine 209, and 239–241 (HIY). Aspartate 201 serves as a coordination point for (6R)-5,10-methylene-5,6,7,8-tetrahydrofolate. Alanine 295 contacts (6R)-5,10-methylene-5,6,7,8-tetrahydrofolate.

This sequence belongs to the thymidylate synthase family. Bacterial-type ThyA subfamily. Homodimer.

Its subcellular location is the cytoplasm. The enzyme catalyses dUMP + (6R)-5,10-methylene-5,6,7,8-tetrahydrofolate = 7,8-dihydrofolate + dTMP. The protein operates within pyrimidine metabolism; dTTP biosynthesis. Functionally, catalyzes the reductive methylation of 2'-deoxyuridine-5'-monophosphate (dUMP) to 2'-deoxythymidine-5'-monophosphate (dTMP) while utilizing 5,10-methylenetetrahydrofolate (mTHF) as the methyl donor and reductant in the reaction, yielding dihydrofolate (DHF) as a by-product. This enzymatic reaction provides an intracellular de novo source of dTMP, an essential precursor for DNA biosynthesis. In Zymomonas mobilis subsp. mobilis (strain ATCC 31821 / ZM4 / CP4), this protein is Thymidylate synthase.